A 316-amino-acid polypeptide reads, in one-letter code: 4-hydroxy-3-methylbut-2-enyl diphosphate reductase (316 aa).

[4Fe-4S] cluster is bound at residue Cys12. (2E)-4-hydroxy-3-methylbut-2-enyl diphosphate contacts are provided by His41 and His74. Dimethylallyl diphosphate-binding residues include His41 and His74. His41 and His74 together coordinate isopentenyl diphosphate. Cys96 is a binding site for [4Fe-4S] cluster. His124 contacts (2E)-4-hydroxy-3-methylbut-2-enyl diphosphate. His124 contributes to the dimethylallyl diphosphate binding site. His124 lines the isopentenyl diphosphate pocket. Glu126 (proton donor) is an active-site residue. A (2E)-4-hydroxy-3-methylbut-2-enyl diphosphate-binding site is contributed by Thr169. Cys199 provides a ligand contact to [4Fe-4S] cluster. Residues Ser227, Ser228, Asn229, and Ser271 each coordinate (2E)-4-hydroxy-3-methylbut-2-enyl diphosphate. Positions 227, 228, 229, and 271 each coordinate dimethylallyl diphosphate. The isopentenyl diphosphate site is built by Ser227, Ser228, Asn229, and Ser271.

The protein belongs to the IspH family. Requires [4Fe-4S] cluster as cofactor.

It carries out the reaction isopentenyl diphosphate + 2 oxidized [2Fe-2S]-[ferredoxin] + H2O = (2E)-4-hydroxy-3-methylbut-2-enyl diphosphate + 2 reduced [2Fe-2S]-[ferredoxin] + 2 H(+). It catalyses the reaction dimethylallyl diphosphate + 2 oxidized [2Fe-2S]-[ferredoxin] + H2O = (2E)-4-hydroxy-3-methylbut-2-enyl diphosphate + 2 reduced [2Fe-2S]-[ferredoxin] + 2 H(+). Its pathway is isoprenoid biosynthesis; dimethylallyl diphosphate biosynthesis; dimethylallyl diphosphate from (2E)-4-hydroxy-3-methylbutenyl diphosphate: step 1/1. The protein operates within isoprenoid biosynthesis; isopentenyl diphosphate biosynthesis via DXP pathway; isopentenyl diphosphate from 1-deoxy-D-xylulose 5-phosphate: step 6/6. Its function is as follows. Catalyzes the conversion of 1-hydroxy-2-methyl-2-(E)-butenyl 4-diphosphate (HMBPP) into a mixture of isopentenyl diphosphate (IPP) and dimethylallyl diphosphate (DMAPP). Acts in the terminal step of the DOXP/MEP pathway for isoprenoid precursor biosynthesis. This Stenotrophomonas maltophilia (strain K279a) protein is 4-hydroxy-3-methylbut-2-enyl diphosphate reductase.